Here is a 346-residue protein sequence, read N- to C-terminus: Small ribosomal subunit biogenesis GTPase RsgA (346 aa).

The interval methionine 1–lysine 26 is disordered. Residues threonine 7 to lysine 20 show a composition bias toward polar residues. Residues glutamate 103 to phenylalanine 271 form the CP-type G domain. GTP is bound by residues asparagine 159–aspartate 162 and glycine 213–serine 221. Zn(2+)-binding residues include cysteine 295, cysteine 300, histidine 302, and cysteine 308.

This sequence belongs to the TRAFAC class YlqF/YawG GTPase family. RsgA subfamily. In terms of assembly, monomer. Associates with 30S ribosomal subunit, binds 16S rRNA. Zn(2+) is required as a cofactor.

The protein localises to the cytoplasm. Its function is as follows. One of several proteins that assist in the late maturation steps of the functional core of the 30S ribosomal subunit. Helps release RbfA from mature subunits. May play a role in the assembly of ribosomal proteins into the subunit. Circularly permuted GTPase that catalyzes slow GTP hydrolysis, GTPase activity is stimulated by the 30S ribosomal subunit. The chain is Small ribosomal subunit biogenesis GTPase RsgA from Haemophilus influenzae (strain PittGG).